Consider the following 482-residue polypeptide: tRNA sulfurtransferase (482 aa).

Residues 61-165 form the THUMP domain; it reads VQICDALTRI…QDVLILVKAR (105 aa). ATP-binding positions include 183–184, lysine 265, glycine 287, and glutamine 296; that span reads LI. The cysteines at positions 344 and 456 are disulfide-linked. Positions 404-482 constitute a Rhodanese domain; sequence FAPTDVLLDI…GFDNVKVYRP (79 aa). Cysteine 456 (cysteine persulfide intermediate) is an active-site residue.

This sequence belongs to the ThiI family.

It is found in the cytoplasm. It catalyses the reaction [ThiI sulfur-carrier protein]-S-sulfanyl-L-cysteine + a uridine in tRNA + 2 reduced [2Fe-2S]-[ferredoxin] + ATP + H(+) = [ThiI sulfur-carrier protein]-L-cysteine + a 4-thiouridine in tRNA + 2 oxidized [2Fe-2S]-[ferredoxin] + AMP + diphosphate. The enzyme catalyses [ThiS sulfur-carrier protein]-C-terminal Gly-Gly-AMP + S-sulfanyl-L-cysteinyl-[cysteine desulfurase] + AH2 = [ThiS sulfur-carrier protein]-C-terminal-Gly-aminoethanethioate + L-cysteinyl-[cysteine desulfurase] + A + AMP + 2 H(+). Its pathway is cofactor biosynthesis; thiamine diphosphate biosynthesis. Catalyzes the ATP-dependent transfer of a sulfur to tRNA to produce 4-thiouridine in position 8 of tRNAs, which functions as a near-UV photosensor. Also catalyzes the transfer of sulfur to the sulfur carrier protein ThiS, forming ThiS-thiocarboxylate. This is a step in the synthesis of thiazole, in the thiamine biosynthesis pathway. The sulfur is donated as persulfide by IscS. This is tRNA sulfurtransferase from Photorhabdus laumondii subsp. laumondii (strain DSM 15139 / CIP 105565 / TT01) (Photorhabdus luminescens subsp. laumondii).